The sequence spans 120 residues: Ribonuclease P protein component (120 aa).

Belongs to the RnpA family. Consists of a catalytic RNA component (M1 or rnpB) and a protein subunit.

The catalysed reaction is Endonucleolytic cleavage of RNA, removing 5'-extranucleotides from tRNA precursor.. Its function is as follows. RNaseP catalyzes the removal of the 5'-leader sequence from pre-tRNA to produce the mature 5'-terminus. It can also cleave other RNA substrates such as 4.5S RNA. The protein component plays an auxiliary but essential role in vivo by binding to the 5'-leader sequence and broadening the substrate specificity of the ribozyme. This chain is Ribonuclease P protein component, found in Microcystis aeruginosa (strain NIES-843 / IAM M-2473).